The sequence spans 342 residues: HTH-type transcriptional regulator GbpR (342 aa).

Residues leucine 16–asparagine 73 form the HTH lysR-type domain. The H-T-H motif DNA-binding region spans leucine 33–glycine 52.

This sequence belongs to the LysR transcriptional regulatory family.

Its function is as follows. Does not seem to be required for sbpA expression. In Azospirillum brasilense, this protein is HTH-type transcriptional regulator GbpR (gbpR).